Reading from the N-terminus, the 152-residue chain is Transcriptional regulator MraZ (152 aa).

2 SpoVT-AbrB domains span residues 5 to 52 and 81 to 124; these read LNPI…THPQ and ATEV…GKSQ.

Belongs to the MraZ family. Forms oligomers.

Its subcellular location is the cytoplasm. It localises to the nucleoid. The polypeptide is Transcriptional regulator MraZ (Coxiella burnetii (strain Dugway 5J108-111)).